The primary structure comprises 240 residues: Biosynthetic peptidoglycan transglycosylase (240 aa).

A helical transmembrane segment spans residues 12-31 (ALMWFMVGSVLLVLLLRFVP).

It belongs to the glycosyltransferase 51 family.

It is found in the cell inner membrane. It carries out the reaction [GlcNAc-(1-&gt;4)-Mur2Ac(oyl-L-Ala-gamma-D-Glu-L-Lys-D-Ala-D-Ala)](n)-di-trans,octa-cis-undecaprenyl diphosphate + beta-D-GlcNAc-(1-&gt;4)-Mur2Ac(oyl-L-Ala-gamma-D-Glu-L-Lys-D-Ala-D-Ala)-di-trans,octa-cis-undecaprenyl diphosphate = [GlcNAc-(1-&gt;4)-Mur2Ac(oyl-L-Ala-gamma-D-Glu-L-Lys-D-Ala-D-Ala)](n+1)-di-trans,octa-cis-undecaprenyl diphosphate + di-trans,octa-cis-undecaprenyl diphosphate + H(+). It participates in cell wall biogenesis; peptidoglycan biosynthesis. Functionally, peptidoglycan polymerase that catalyzes glycan chain elongation from lipid-linked precursors. This chain is Biosynthetic peptidoglycan transglycosylase, found in Pseudomonas fluorescens (strain ATCC BAA-477 / NRRL B-23932 / Pf-5).